We begin with the raw amino-acid sequence, 391 residues long: 1-deoxy-D-xylulose 5-phosphate reductoisomerase (391 aa).

NADPH contacts are provided by Thr11, Gly12, Ser13, Ile14, and Asn126. Lys127 contributes to the 1-deoxy-D-xylulose 5-phosphate binding site. Glu128 serves as a coordination point for NADPH. Asp152 is a binding site for Mn(2+). Ser153, Glu154, Ser176, and His199 together coordinate 1-deoxy-D-xylulose 5-phosphate. A Mn(2+)-binding site is contributed by Glu154. Gly205 contacts NADPH. Ser212, Asn217, Lys218, and Glu221 together coordinate 1-deoxy-D-xylulose 5-phosphate. Glu221 provides a ligand contact to Mn(2+).

The protein belongs to the DXR family. Mg(2+) is required as a cofactor. Requires Mn(2+) as cofactor.

The catalysed reaction is 2-C-methyl-D-erythritol 4-phosphate + NADP(+) = 1-deoxy-D-xylulose 5-phosphate + NADPH + H(+). It functions in the pathway isoprenoid biosynthesis; isopentenyl diphosphate biosynthesis via DXP pathway; isopentenyl diphosphate from 1-deoxy-D-xylulose 5-phosphate: step 1/6. Functionally, catalyzes the NADPH-dependent rearrangement and reduction of 1-deoxy-D-xylulose-5-phosphate (DXP) to 2-C-methyl-D-erythritol 4-phosphate (MEP). The protein is 1-deoxy-D-xylulose 5-phosphate reductoisomerase of Acidithiobacillus ferrooxidans (strain ATCC 53993 / BNL-5-31) (Leptospirillum ferrooxidans (ATCC 53993)).